The chain runs to 291 residues: Small ribosomal subunit biogenesis GTPase RsgA 2 (291 aa).

The CP-type G domain occupies 63-221 (ENALVRPPVA…VADTPGFSSI (159 aa)). GTP contacts are provided by residues 112-115 (SKMD) and 164-172 (GQSGVGKST). The Zn(2+) site is built by Cys-245, Cys-250, His-252, and Cys-258.

Belongs to the TRAFAC class YlqF/YawG GTPase family. RsgA subfamily. In terms of assembly, monomer. Associates with 30S ribosomal subunit, binds 16S rRNA. Zn(2+) is required as a cofactor.

The protein resides in the cytoplasm. One of several proteins that assist in the late maturation steps of the functional core of the 30S ribosomal subunit. Helps release RbfA from mature subunits. May play a role in the assembly of ribosomal proteins into the subunit. Circularly permuted GTPase that catalyzes slow GTP hydrolysis, GTPase activity is stimulated by the 30S ribosomal subunit. This chain is Small ribosomal subunit biogenesis GTPase RsgA 2, found in Listeria monocytogenes serovar 1/2a (strain ATCC BAA-679 / EGD-e).